The sequence spans 2325 residues: MRNRLLLIFYTTTVLWTIGYTQLVLGKPPIFQDGGSVEQKVAVEGEIIRLKCDDAELAEQYEWRIGDASGELIATSKFCEVQASRVNDEKKYRCVARNTVGAAISPPSMVRSKYLDDFDASDESVQYEVTTGVGRYFVLRRPTLLASRNLDISYSWIKDDSHQVTPDATHFVTSDGNLVVTGVKRDDFGAYKLMASSDDLKEIVSKEYNVRDNGLSPSLQNTLSIVYFPTDRTIIESTLPHDEIFDCVTSFGSKDDVRIRWFLNGQQISGSEVGMTTTLNNRRLIISNPSSFTRGEHKLECRADAAMGRTSDQKSAYMTFISRPILKDLPNEIQKTVGSSLSLKCSVKKKSSMDIKWYKNGLMMTTQRGKLTIDRIKQDDFGLYQCEATNAAGADLASVWVKEGEANETVATEMSEDGMSLEEEISMETPPPRKLKFFDNSKSQEQLFPFTSELEPSQKLIKTPKDLTVASGTDRIMMECAATGSPPPNIIWLLNGHEIQTDNVKYDLTNDGLAIHDIRKSDEGEYTCEISGSNVKATANVQVNGDSLIEYGPADQKSLIGTNVEFSCEVAKEYVRKASVEWYLNDVLLPVNGNSGLRISRNRKGSLIIRQVGPDNTGEYRCRVTVDGREENASAMLQIIEKPAMPERVRAELHNETMPAKVRVRWNEGFDGNEPIIKHAIEMRTMGPTGLWSDWTTAIDNIPKEEGKPCCWTDIEDLRPSSTAEFRVVASNKHGPGKPSLPSYSVTMPQQPPSAAPRNVAASARSPHSVMVQWQQPKEELDSGDVLGYVVRYRLAGYSSLTWNEKNLTTKDARNTLVDELITWREYEIQVAAYNKRGLGVFSESIEVTTSEGRPTQAPKNVRVKVLNSTAVAIEFTAPEQQRIPGVNLGYKVQFWKGEPEKGELYKQVILDPDRRQLTTVVNELEKFGHYNLTTLCFTTPGDGPRSNVVKVVTEEDTPESVDELSIAEVMYNGAVITWNSPLKQNGIVTKYTIRHWAASSPDVKTKHEVDGSTTNFTIDGLQPSTRYGVDVMASTRKGDGPVEETKFESGVPPELPGRPSMLSIGDISATTVQLHFTPGFDGHTAIRQWVVEGKMADSSVFAHVFNVSAPKARSITVTGLRPFTQYQLRLIAENVKGRGAPSEPSRSFETLQTNPDTPSQRLFAEPVSATSISVSWTPLLATHWNGQPKGYLIVYREIDDENWKEVRTPALRSSEHTVTDLRPFTSYEVNVFSENGFGRSLPTDSVKARTYESVPSGSPRNIVVTAEGSKAAIIKWNPVAELSTNGDVIGYKLRVVPERESLMADETKVIDIPGQSTLMAKVSDLRPFTSYHVYMSAYTIVGNGPENSTPISFETMEDVPAPPESFQCSYISEQEVRMKWLPPGSPNGKITNYIISYWKSHEPRSMAIDAPLLGNLLMFAAMSLNPNTQYTFAIKARNSKGESEEAVAEVMTSSVRLPVRNAPAPVRDTLSQHQATEIIIRWDESLPRKLTEDAESPVRAVQVSYQKTNEDEWITLEKKFEYSKRRSVIKHLSPNSMFRFRIRFIGDFLESSWSPESEWMRTLPSAPFAQPISLKATPYERNSVQLEWVVPHKSTWNSDAIGYRIHYREYPSNETWQMEEIAIRDEHEDKEEKILAKLDSFKHYILRMRIFNSEGEGPFSAPVFAYVGYSIPKRNLNNIITEPLSSSSIRVKWDAWPKEDSETITSFKVRYVPVASVLSSVSSEEEIMIVDTNECTLNDLRKFTEYQISVSPYNRAGEGKMSQVRDKTLEDKPGPVGILRFSDVLMDSVKVSWDEPSQPNGNVIGYIVNYKGYRMQEEFKNEDQQRTSRNYFDTHGLAEGVTYFFSVWAETSAGKGEQRSANVTIGPSKDGPPPPSKPQITSGQSYVTLNWNDVADSDEIVGHLLQAKRVSVAEEAPANGYVSQRPRRNEIKGAKSAAQTAAATSTRPTHPIGEWITLRPTEGRSEKEQVSYRELQPSSYYAFRVFTRNVRGIGMASVETEQLFVPESIPDDPFYTTWWFMALVAMGAFVLIVIIIAILCVTGSSAKYRREKRSRSIDSLQLADGNFASFQLKGTSAANMTRSRELPTRPGTTQSWVSDQSREPPAYGSVLGGSRNSGGVMNMYGLATDVIPPLPNSGPPHTSVEAMQKLSALVGRDIRSQNTAYVTPSARGGSDNGRNEYMPTRSDLYATRSEYGRVEYRGHIPSSSGGSGAGSQPQGSPLQQPEVYDSFDEEEDVVDDDTVIRGDRTMTDGVDDIARHYGSTDQYRDTWRKVRDTDMVRAPILTGHPSSAAGRSSTTDSTSEGPWANIPATPNLTTGFSSFV.

Positions 1–26 (MRNRLLLIFYTTTVLWTIGYTQLVLG) are cleaved as a signal peptide. Over 27–2019 (KPPIFQDGGS…IPDDPFYTTW (1993 aa)) the chain is Extracellular. Ig-like C2-type domains are found at residues 28–105 (PPIF…AAIS), 217–319 (PSLQ…AYMT), and 324–397 (PILK…ADLA). 3 cysteine pairs are disulfide-bonded: C52/C94, C247/C301, and C345/C386. N407 carries an N-linked (GlcNAc...) asparagine glycan. 2 Ig-like C2-type domains span residues 456–544 (PSQK…VQVN) and 547–638 (SLIE…AMLQ). 2 disulfides stabilise this stretch: C480-C528 and C568-C622. N-linked (GlcNAc...) asparagine glycans are attached at residues N632, N655, N807, N868, N932, and N1016. Fibronectin type-III domains follow at residues 645–751 (MPER…MPQQ), 756–853 (APRN…TSEG), 858–957 (APKN…TEED), 961–1055 (SVDE…VPPE), 1059–1154 (RPSM…TLQT), 1159–1254 (PSQR…TYES), 1259–1359 (SPRN…TMED), 1363–1457 (PPES…SSVR), 1463–1566 (APAP…TLPS), 1571–1671 (QPIS…VGYS), 1673–1775 (PKRN…DKPG), 1776–1872 (PVGI…SKDG), and 1873–2004 (PPPP…TEQL). A disordered region spans residues 1036–1059 (TRKGDGPVEETKFESGVPPELPGR). Residues 1037–1048 (RKGDGPVEETKF) show a composition bias toward basic and acidic residues. The N-linked (GlcNAc...) asparagine glycan is linked to N1107. A disordered region spans residues 1137 to 1161 (KGRGAPSEPSRSFETLQTNPDTPSQ). The segment covering 1145–1161 (PSRSFETLQTNPDTPSQ) has biased composition (polar residues). The N-linked (GlcNAc...) asparagine glycan is linked to N1614. Disordered regions lie at residues 1857–1884 (GEQR…ITSG) and 1918–1947 (PANG…ATST). N1863 is a glycosylation site (N-linked (GlcNAc...) asparagine). Residues 1935–1947 (AKSAAQTAAATST) show a composition bias toward low complexity. The helical transmembrane segment at 2020–2040 (WFMALVAMGAFVLIVIIIAIL) threads the bilayer. Residues 2041–2325 (CVTGSSAKYR…NLTTGFSSFV (285 aa)) are Cytoplasmic-facing. Disordered stretches follow at residues 2080-2113 (NMTR…SVLG), 2164-2187 (TAYV…PTRS), 2202-2226 (RGHI…LQQP), and 2285-2325 (ILTG…SSFV). Positions 2091–2100 (PGTTQSWVSD) are enriched in polar residues. A compositionally biased stretch (low complexity) spans 2215–2226 (GSQPQGSPLQQP). Polar residues-rich tracts occupy residues 2294-2305 (AGRSSTTDSTSE) and 2313-2325 (ATPN…SSFV).

The protein belongs to the sidekick family.

Its subcellular location is the membrane. Functionally, cell adhesion protein. This Caenorhabditis elegans protein is Protein sidekick homolog (rig-4).